The following is a 40-amino-acid chain: uncharacterized protein (40 aa).

This is an uncharacterized protein from Myxococcus xanthus (strain DK1622).